The primary structure comprises 277 residues: MEMO1 family protein CTN_0605 (277 aa).

This sequence belongs to the MEMO1 family.

The chain is MEMO1 family protein CTN_0605 from Thermotoga neapolitana (strain ATCC 49049 / DSM 4359 / NBRC 107923 / NS-E).